A 424-amino-acid chain; its full sequence is Dihydroorotase (424 aa).

Zn(2+) is bound by residues His58 and His60. Substrate-binding positions include His60 to Arg62, Asn92, and Asn276. Residue Asp303 coordinates Zn(2+). Asp303 is a catalytic residue. Substrate is bound by residues His307 and Phe321–Gly322.

Belongs to the metallo-dependent hydrolases superfamily. DHOase family. Class I DHOase subfamily. Zn(2+) is required as a cofactor.

The enzyme catalyses (S)-dihydroorotate + H2O = N-carbamoyl-L-aspartate + H(+). Its pathway is pyrimidine metabolism; UMP biosynthesis via de novo pathway; (S)-dihydroorotate from bicarbonate: step 3/3. Its function is as follows. Catalyzes the reversible cyclization of carbamoyl aspartate to dihydroorotate. This Staphylococcus aureus (strain COL) protein is Dihydroorotase.